The following is a 94-amino-acid chain: uncharacterized protein (94 aa).

Residues Met1–Ser23 form a disordered region.

This is an uncharacterized protein from Homo sapiens (Human).